A 1169-amino-acid chain; its full sequence is C5a peptidase (1169 aa).

The signal sequence occupies residues 1 to 31 (MRKKQKLPFDKLAIALMSTSILLNAQSDIKA). The disordered stretch occupies residues 33–111 (TVTEDTPATE…ETIRDLNDPS (79 aa)). A compositionally biased stretch (polar residues) spans 48-67 (PQQTAVSEEAPSSSSKETNP). A Peptidase S8 domain is found at 101-583 (KETIRDLNDP…AGAVDAKKAS (483 aa)). Residues 102–111 (ETIRDLNDPS) are compositionally biased toward basic and acidic residues. Catalysis depends on charge relay system residues aspartate 132, histidine 195, and serine 514. The tract at residues 1028–1135 (NLLEGHSNKP…RDQLPTTNDK (108 aa)) is disordered. 3 stretches are compositionally biased toward basic and acidic residues: residues 1033–1056 (HSNK…KPEQ), 1063–1073 (PDKKPEAKPEQ), and 1080–1092 (PDKK…EKDS). 4 tandem repeats follow at residues 1036-1052 (KPEQ…TPET), 1053-1069 (KPEQ…KPEA), 1070-1086 (KPEQ…KPET), and 1087-1103 (KPEK…TPQK). The segment at 1036-1103 (KPEQDGSDQV…GQTPGKTPQK (68 aa)) is 4 X 17 AA tandem repeats. Polar residues predominate over residues 1093-1108 (SGQTPGKTPQKGQPSR). The LPXTG sorting signal motif lies at 1129–1133 (LPTTN). Pentaglycyl murein peptidoglycan amidated threonine is present on threonine 1132. A propeptide spans 1133 to 1169 (NDKDTNRLHLLKLVMTTFFFGLVAHIFKTKRQKETKK) (removed by sortase).

Belongs to the peptidase S8 family. In terms of processing, cleaved by SpeB protease; leading to its degradation. Degradation by SpeB is probably strictly regulated to preserve integrity of C5a peptidase.

The protein localises to the secreted. It localises to the cell wall. The catalysed reaction is The primary cleavage site is at 67-His-|-Lys-68 in human C5a with a minor secondary cleavage site at 58-Ala-|-Ser-59.. Its function is as follows. This virulence factor of S.pyogenes specifically cleaves the human serum chemotaxin C5a at '68-Lys-|-Asp-69' bond near its C-terminus, destroying its ability to serve as a chemoattractant. This Streptococcus pyogenes serotype M3 (strain ATCC BAA-595 / MGAS315) protein is C5a peptidase (scpA).